Here is a 161-residue protein sequence, read N- to C-terminus: uncharacterized protein (161 aa).

A helical transmembrane segment spans residues 76–94 (ISISSQCIFNVVILSFVFT).

Its subcellular location is the membrane. This is an uncharacterized protein from Saccharomyces cerevisiae (strain ATCC 204508 / S288c) (Baker's yeast).